The following is a 134-amino-acid chain: Retinol-binding protein 2 (134 aa).

Residues lysine 41 and glutamine 109 each coordinate all-trans-retinol.

Belongs to the calycin superfamily. Fatty-acid binding protein (FABP) family.

It is found in the cytoplasm. Functionally, intracellular transport of retinol. The chain is Retinol-binding protein 2 (Rbp2) from Rattus norvegicus (Rat).